A 323-amino-acid chain; its full sequence is Mycothiol acetyltransferase (323 aa).

2 consecutive N-acetyltransferase domains span residues 5-145 and 168-323; these read LTTD…LPLR and VEIR…PEER. Glu36 serves as a coordination point for 1D-myo-inositol 2-(L-cysteinylamino)-2-deoxy-alpha-D-glucopyranoside. Residue 83–85 participates in acetyl-CoA binding; sequence VAV. 1D-myo-inositol 2-(L-cysteinylamino)-2-deoxy-alpha-D-glucopyranoside-binding residues include Glu195, Lys236, and Glu252. Acetyl-CoA is bound by residues 256–258 and 263–269; these read VGV and QGSGLGR. Tyr290 provides a ligand contact to 1D-myo-inositol 2-(L-cysteinylamino)-2-deoxy-alpha-D-glucopyranoside. 295-300 contributes to the acetyl-CoA binding site; sequence NRPAVQ.

It belongs to the acetyltransferase family. MshD subfamily. As to quaternary structure, monomer.

The catalysed reaction is 1D-myo-inositol 2-(L-cysteinylamino)-2-deoxy-alpha-D-glucopyranoside + acetyl-CoA = mycothiol + CoA + H(+). Its function is as follows. Catalyzes the transfer of acetyl from acetyl-CoA to desacetylmycothiol (Cys-GlcN-Ins) to form mycothiol. The chain is Mycothiol acetyltransferase from Thermobifida fusca (strain YX).